The primary structure comprises 211 residues: Thymidylate kinase (211 aa).

10–17 (GPDGAGKT) is a binding site for ATP.

The protein belongs to the thymidylate kinase family.

The enzyme catalyses dTMP + ATP = dTDP + ADP. Functionally, phosphorylation of dTMP to form dTDP in both de novo and salvage pathways of dTTP synthesis. This Lactococcus lactis subsp. lactis (strain IL1403) (Streptococcus lactis) protein is Thymidylate kinase (tmk).